The primary structure comprises 131 residues: Small ribosomal subunit protein bS6m (131 aa).

Belongs to the bacterial ribosomal protein bS6 family. Component of the mitochondrial small ribosomal subunit (mt-SSU). Mature yeast 74S mitochondrial ribosomes consist of a small (37S) and a large (54S) subunit. The 37S small subunit contains a 15S ribosomal RNA (15S mt-rRNA) and 34 different proteins. The 54S large subunit contains a 21S rRNA (21S mt-rRNA) and 46 different proteins.

It is found in the mitochondrion. Component of the mitochondrial ribosome (mitoribosome), a dedicated translation machinery responsible for the synthesis of mitochondrial genome-encoded proteins, including at least some of the essential transmembrane subunits of the mitochondrial respiratory chain. The mitoribosomes are attached to the mitochondrial inner membrane and translation products are cotranslationally integrated into the membrane. The protein is Small ribosomal subunit protein bS6m (MRP17) of Saccharomyces cerevisiae (strain ATCC 204508 / S288c) (Baker's yeast).